Here is a 252-residue protein sequence, read N- to C-terminus: Tumor necrosis factor ligand superfamily member 15 (252 aa).

The Cytoplasmic portion of the chain corresponds to 1–39 (MAEELGLGFGEGVPVEVLPEGCRHRPEARAGLAARSKAC). Residues 40–60 (LALTCCLLSFPILAGLSTLLM) traverse the membrane as a helical; Signal-anchor for type II membrane protein segment. At 61–252 (AGQLRVPGKD…DKTFFGAFLL (192 aa)) the chain is on the extracellular side. The region spanning 96–252 (PRAHLTIKKQ…DKTFFGAFLL (157 aa)) is the THD domain. The N-linked (GlcNAc...) asparagine glycan is linked to Asn137. The cysteines at positions 163 and 203 are disulfide-linked. A glycan (N-linked (GlcNAc...) asparagine) is linked at Asn230.

This sequence belongs to the tumor necrosis factor family. Homotrimer.

It localises to the membrane. Its function is as follows. Receptor for TNFRSF25 and TNFRSF6B. Mediates activation of NF-kappa-B. Inhibits vascular endothelial growth and angiogenesis (in vitro). Promotes activation of caspases and apoptosis. Promotes splenocyte alloactivation. The chain is Tumor necrosis factor ligand superfamily member 15 (Tnfsf15) from Mus musculus (Mouse).